The following is a 379-amino-acid chain: Queuine tRNA-ribosyltransferase (379 aa).

The Proton acceptor role is filled by Asp94. Substrate contacts are provided by residues 94-98 (DSGGF), Asp148, Gln191, and Gly218. The RNA binding stretch occupies residues 249–255 (GVGSPDS). The active-site Nucleophile is Asp268. Residues 273–277 (TRIAR) form an RNA binding; important for wobble base 34 recognition region. Zn(2+) is bound by residues Cys306, Cys308, Cys311, and His337.

It belongs to the queuine tRNA-ribosyltransferase family. As to quaternary structure, homodimer. Within each dimer, one monomer is responsible for RNA recognition and catalysis, while the other monomer binds to the replacement base PreQ1. Zn(2+) serves as cofactor.

It catalyses the reaction 7-aminomethyl-7-carbaguanine + guanosine(34) in tRNA = 7-aminomethyl-7-carbaguanosine(34) in tRNA + guanine. The protein operates within tRNA modification; tRNA-queuosine biosynthesis. Functionally, catalyzes the base-exchange of a guanine (G) residue with the queuine precursor 7-aminomethyl-7-deazaguanine (PreQ1) at position 34 (anticodon wobble position) in tRNAs with GU(N) anticodons (tRNA-Asp, -Asn, -His and -Tyr). Catalysis occurs through a double-displacement mechanism. The nucleophile active site attacks the C1' of nucleotide 34 to detach the guanine base from the RNA, forming a covalent enzyme-RNA intermediate. The proton acceptor active site deprotonates the incoming PreQ1, allowing a nucleophilic attack on the C1' of the ribose to form the product. After dissociation, two additional enzymatic reactions on the tRNA convert PreQ1 to queuine (Q), resulting in the hypermodified nucleoside queuosine (7-(((4,5-cis-dihydroxy-2-cyclopenten-1-yl)amino)methyl)-7-deazaguanosine). The sequence is that of Queuine tRNA-ribosyltransferase from Listeria monocytogenes serotype 4a (strain HCC23).